Here is a 199-residue protein sequence, read N- to C-terminus: MANRGPAYGLSREVQQKIEKQYDADLEQILIQWITTQCRKDVGRPQPGRENFQNWLKDGTVLCELINGLYPEGQAPVKKIQASTMAFKQMEQISQFLQAAERYGINTTDIFQTVDLWEGKNMACVQRTLMNLGGLAVARDDGLFSGDPNWFPKKSKENPRYFSDNQLQEGKNVIGLQMGTNRGASQAGMTGYGMPRQIL.

Position 2 is an N-acetylalanine (Ala2). Residue Ser11 is modified to Phosphoserine. N6-acetyllysine occurs at positions 17 and 20. A Calponin-homology (CH) domain is found at 24–136 (ADLEQILIQW…RTLMNLGGLA (113 aa)). Ser163 is modified (phosphoserine). Lys171 is covalently cross-linked (Glycyl lysine isopeptide (Lys-Gly) (interchain with G-Cter in SUMO2)). The stretch at 174-199 (IGLQMGTNRGASQAGMTGYGMPRQIL) is one Calponin-like repeat. Thr180 carries the post-translational modification Phosphothreonine. An omega-N-methylarginine mark is found at Arg182 and Arg196.

It belongs to the calponin family.

This is Transgelin-2 (TAGLN2) from Bos taurus (Bovine).